The sequence spans 225 residues: Uracil-DNA glycosylase (225 aa).

Asp68 serves as the catalytic Proton acceptor.

This sequence belongs to the uracil-DNA glycosylase (UDG) superfamily. UNG family.

It localises to the cytoplasm. It catalyses the reaction Hydrolyzes single-stranded DNA or mismatched double-stranded DNA and polynucleotides, releasing free uracil.. Its function is as follows. Excises uracil residues from the DNA which can arise as a result of misincorporation of dUMP residues by DNA polymerase or due to deamination of cytosine. This Mycolicibacterium gilvum (strain PYR-GCK) (Mycobacterium gilvum (strain PYR-GCK)) protein is Uracil-DNA glycosylase.